The chain runs to 249 residues: 3-deoxy-D-manno-octulosonic acid kinase (249 aa).

Aspartate 175 is a catalytic residue.

The protein belongs to the protein kinase superfamily. KdkA/RfaP family.

It is found in the cell inner membrane. It carries out the reaction an alpha-Kdo-(2-&gt;6)-lipid IVA + ATP = a 4-O-phospho-alpha-Kdo-(2-&gt;6)-lipid IVA + ADP + H(+). The protein operates within bacterial outer membrane biogenesis; LPS core biosynthesis. Functionally, catalyzes the ATP-dependent phosphorylation of the 3-deoxy-D-manno-octulosonic acid (Kdo) residue in Kdo-lipid IV(A) at the 4-OH position. The chain is 3-deoxy-D-manno-octulosonic acid kinase from Xanthomonas euvesicatoria pv. vesicatoria (strain 85-10) (Xanthomonas campestris pv. vesicatoria).